Here is a 169-residue protein sequence, read N- to C-terminus: Cell division inhibitor SulA (169 aa).

A ftsZ binding region spans residues 106–112 (ALRTGNY). The interval 162 to 169 (KIHSNLYH) is lon protease binding.

The protein belongs to the SulA family. As to quaternary structure, interacts with FtsZ. Is rapidly cleaved and degraded by the Lon protease once DNA damage is repaired.

In terms of biological role, component of the SOS system and an inhibitor of cell division. Accumulation of SulA causes rapid cessation of cell division and the appearance of long, non-septate filaments. In the presence of GTP, binds a polymerization-competent form of FtsZ in a 1:1 ratio, thus inhibiting FtsZ polymerization and therefore preventing it from participating in the assembly of the Z ring. This mechanism prevents the premature segregation of damaged DNA to daughter cells during cell division. The chain is Cell division inhibitor SulA from Shigella flexneri serotype 5b (strain 8401).